Reading from the N-terminus, the 276-residue chain is NADH-cytochrome b5 reductase 2 (276 aa).

Positions 15 to 127 (EAKYPLPLIE…RGPTGRLFYN (113 aa)) constitute an FAD-binding FR-type domain. Lys17 carries the N6-acetyllysine modification. A Phosphotyrosine modification is found at Tyr18. FAD-binding positions include 107–137 (ENMKIGDTILFRGPTGRLFYNEPGTLLIKTD) and 146–181 (LVHHLGMIAGGTGITPMLQLIRHITKDTSDGTRMSL).

It belongs to the flavoprotein pyridine nucleotide cytochrome reductase family. FAD serves as cofactor.

The catalysed reaction is 2 Fe(III)-[cytochrome b5] + NADH = 2 Fe(II)-[cytochrome b5] + NAD(+) + H(+). Its function is as follows. NADH-cytochrome b5 reductases are involved in desaturation and elongation of fatty acids, cholesterol biosynthesis, drug metabolism, and, in erythrocyte, methemoglobin reduction. Responsible for NADH-dependent lucigenin chemiluminescence in spermatozoa by reducing both lucigenin and 2-[4-iodophenyl]-3-[4-nitrophenyl]-5-[2,4-disulfophenyl]-2H tetrazolium monosodium salt (WST-1). This chain is NADH-cytochrome b5 reductase 2 (Cyb5r2), found in Rattus norvegicus (Rat).